The primary structure comprises 318 residues: MKKFTCVQDIGDLKSALAEAFEIQKDRFKYVELGRNKTLMMIFFNSSLRTRLSTQKAALNLGMNVMVLDINQGAWKLETERGVIMDGDKPEHLLEAIPVMGCYCDIIGVRSFARFEDRDFDYQETILNQFIQYSGRPVFSMEAATRHPLQSFADLITIEEYKKTARPKVVMTWAPHPRPLPQAVPNSFAEWMNATDYDFVITHPEGYELAPQFVGNAKVEYDQMKAFEGADFIYAKNWAAYTGDNYGQILSKDREWTVSDRQMAVTNNAFFMHCLPVRRNMIVTDDVIESPQSIVIPEAANREISATVVLKRLIEGLE.

Carbamoyl phosphate contacts are provided by residues 47–50 (SLRT), Trp-75, and Arg-110. Glu-142 lines the N(2)-succinyl-L-ornithine pocket. 147–150 (HPLQ) is a carbamoyl phosphate binding site. The N(2)-succinyl-L-ornithine site is built by His-176 and Lys-236. 274–275 (CL) serves as a coordination point for carbamoyl phosphate. Arg-278 contributes to the N(2)-succinyl-L-ornithine binding site. Residue Arg-302 participates in carbamoyl phosphate binding.

It belongs to the aspartate/ornithine carbamoyltransferase superfamily. SOTCase family. Homotrimer.

It catalyses the reaction N(2)-succinyl-L-ornithine + carbamoyl phosphate = N(2)-succinyl-L-citrulline + phosphate + H(+). It functions in the pathway amino-acid biosynthesis; L-arginine biosynthesis. In terms of biological role, catalyzes the transfer of the carbamoyl group from carbamoyl phosphate to the delta-amino group of N(2)-succinyl-L-ornithine to produce N(2)-succinyl-L-citrulline. Is essential for arginine biosynthesis. Has no activity with either L-ornithine or L-aspartate as substrate. Also has no detectable AOTCase activity, being unable to convert N(2)-acetyl-L-ornithine to N(2)-acetyl-L-citrulline. This chain is N-succinylornithine carbamoyltransferase, found in Bacteroides thetaiotaomicron (strain ATCC 29148 / DSM 2079 / JCM 5827 / CCUG 10774 / NCTC 10582 / VPI-5482 / E50).